A 395-amino-acid chain; its full sequence is 1-deoxy-D-xylulose 5-phosphate reductoisomerase (395 aa).

NADPH-binding residues include T10, G11, S12, I13, K37, and N123. K124 provides a ligand contact to 1-deoxy-D-xylulose 5-phosphate. NADPH is bound at residue E125. D149 is a binding site for Mn(2+). 1-deoxy-D-xylulose 5-phosphate is bound by residues S150, E151, S185, and H208. A Mn(2+)-binding site is contributed by E151. G214 is a binding site for NADPH. 4 residues coordinate 1-deoxy-D-xylulose 5-phosphate: S221, N226, K227, and E230. E230 is a Mn(2+) binding site.

The protein belongs to the DXR family. Requires Mg(2+) as cofactor. Mn(2+) is required as a cofactor.

It carries out the reaction 2-C-methyl-D-erythritol 4-phosphate + NADP(+) = 1-deoxy-D-xylulose 5-phosphate + NADPH + H(+). Its pathway is isoprenoid biosynthesis; isopentenyl diphosphate biosynthesis via DXP pathway; isopentenyl diphosphate from 1-deoxy-D-xylulose 5-phosphate: step 1/6. Catalyzes the NADPH-dependent rearrangement and reduction of 1-deoxy-D-xylulose-5-phosphate (DXP) to 2-C-methyl-D-erythritol 4-phosphate (MEP). This Shewanella loihica (strain ATCC BAA-1088 / PV-4) protein is 1-deoxy-D-xylulose 5-phosphate reductoisomerase.